The following is a 61-amino-acid chain: Antimicrobial peptide 1 (61 aa).

Positions 1–24 are cleaved as a signal peptide; sequence LPVAFLKFAIVLILFIAMSAMIEA. Glutamine 25 bears the Pyrrolidone carboxylic acid mark. 3 disulfide bridges follow: cysteine 26/cysteine 43, cysteine 33/cysteine 47, and cysteine 42/cysteine 58.

It belongs to the AMP family. Homodimer. In terms of processing, three disulfide bonds are present. In terms of tissue distribution, found only in seeds.

The protein localises to the secreted. Possesses antifungal activity and is also active on two tested Gram-positive bacteria but is non-toxic for Gram-negative bacteria and cultured human cells. The protein is Antimicrobial peptide 1 (AMP1) of Mirabilis jalapa (Garden four-o'clock).